Here is a 542-residue protein sequence, read N- to C-terminus: 4-coumarate--CoA ligase 2 (542 aa).

Residues S189, S190, G191, T192, T193, and K197 each coordinate ATP. Y239 and S243 together coordinate (E)-4-coumaroyl-AMP. 2 residues coordinate (E)-caffeoyl-AMP: Y239 and S243. 2 residues coordinate (E)-feruloyl-AMP: Y239 and S243. Residue K260 participates in CoA binding. The tract at residues D262 to Q331 is SBD1. A309 contributes to the (E)-4-coumaroyl-AMP binding site. A309 contributes to the (E)-caffeoyl-AMP binding site. Residue A309 coordinates (E)-feruloyl-AMP. The ATP site is built by Q331, G332, and T336. (E)-4-coumaroyl-AMP contacts are provided by G332, T336, M344, D420, R435, K437, and K441. (E)-caffeoyl-AMP is bound by residues G332, T336, M344, D420, R435, K437, and K441. The (E)-feruloyl-AMP site is built by G332, T336, M344, D420, R435, K437, and K441. AMP contacts are provided by G332 and T336. The interval G332–Y399 is SBD2. ATP is bound by residues D420 and R435. D420 is an AMP binding site. AMP contacts are provided by K437 and K441. K443 and G444 together coordinate CoA. Position 446 (Q446) interacts with AMP. Position 526 (K526) interacts with ATP.

Belongs to the ATP-dependent AMP-binding enzyme family. Requires Mg(2+) as cofactor. Mainly expressed in old stems and, to a lower extent, in flowers (e.g. in ovary), leaves, young stems, shoot tips and patel limbs.

It catalyses the reaction (E)-4-coumarate + ATP + CoA = (E)-4-coumaroyl-CoA + AMP + diphosphate. It carries out the reaction (E)-caffeate + ATP + CoA = (E)-caffeoyl-CoA + AMP + diphosphate. The catalysed reaction is (E)-ferulate + ATP + CoA = (E)-feruloyl-CoA + AMP + diphosphate. The enzyme catalyses (E)-cinnamate + ATP + CoA = (E)-cinnamoyl-CoA + AMP + diphosphate. It catalyses the reaction (E)-4-coumarate + ATP + H(+) = (E)-4-coumaroyl-AMP + diphosphate. It carries out the reaction (E)-4-coumaroyl-AMP + CoA = (E)-4-coumaroyl-CoA + AMP + H(+). The catalysed reaction is (E)-caffeate + ATP + H(+) = (E)-caffeoyl-AMP + diphosphate. The enzyme catalyses (E)-caffeoyl-AMP + CoA = (E)-caffeoyl-CoA + AMP + H(+). It catalyses the reaction (E)-ferulate + ATP + H(+) = (E)-feruloyl-AMP + diphosphate. It carries out the reaction (E)-feruloyl-AMP + CoA = (E)-feruloyl-CoA + AMP + H(+). The protein operates within phytoalexin biosynthesis; 3,4',5-trihydroxystilbene biosynthesis; 3,4',5-trihydroxystilbene from trans-4-coumarate: step 1/2. Functionally, major enzyme of the phenylpropanoid pathway that mediates the production of several precursors for numerous metabolites and regulates carbon flow. Catalyzes the formation of CoA thioesters using 4-coumarate, ferulate, caffeate, and cinnamate as substrates. Follows a two-step reaction mechanism, wherein a (hydroxy)cinnamate substrate first undergoes adenylation by ATP leading to an acyl-AMP, followed by a thioesterification in the presence of CoA to yield the final (hydroxy)cinnamoyl-CoA product. Almost inactive toward sinapate. The chain is 4-coumarate--CoA ligase 2 from Nicotiana tabacum (Common tobacco).